Reading from the N-terminus, the 89-residue chain is Small ribosomal subunit protein uS14A (89 aa).

The protein belongs to the universal ribosomal protein uS14 family. Part of the 30S ribosomal subunit. Contacts proteins S3 and S10.

Functionally, binds 16S rRNA, required for the assembly of 30S particles and may also be responsible for determining the conformation of the 16S rRNA at the A site. The sequence is that of Small ribosomal subunit protein uS14A from Listeria welshimeri serovar 6b (strain ATCC 35897 / DSM 20650 / CCUG 15529 / CIP 8149 / NCTC 11857 / SLCC 5334 / V8).